The primary structure comprises 870 residues: Phenylalanine--tRNA ligase beta subunit (870 aa).

Residues alanine 39 to threonine 148 enclose the tRNA-binding domain. One can recognise a B5 domain in the interval proline 427–serine 551. Residues leucine 450–isoleucine 498 enclose the RPE1 insert domain. Residues aspartate 529, aspartate 535, glutamate 538, and glutamate 539 each contribute to the Mg(2+) site. The region spanning serine 776 to arginine 869 is the FDX-ACB domain.

The protein belongs to the phenylalanyl-tRNA synthetase beta subunit family. Type 1 subfamily. In terms of assembly, tetramer of two alpha and two beta subunits. Mg(2+) is required as a cofactor.

Its subcellular location is the cytoplasm. It catalyses the reaction tRNA(Phe) + L-phenylalanine + ATP = L-phenylalanyl-tRNA(Phe) + AMP + diphosphate + H(+). This chain is Phenylalanine--tRNA ligase beta subunit (pheT), found in Rickettsia bellii (strain RML369-C).